Reading from the N-terminus, the 2071-residue chain is GTPase-activating protein BEM2 (2071 aa).

Disordered stretches follow at residues 1 to 115 (MPLK…QAHK) and 171 to 195 (AAPA…SERP). 2 stretches are compositionally biased toward low complexity: residues 16–31 (PQSC…QSSC) and 42–55 (SSIS…SKNN). A compositionally biased stretch (polar residues) spans 62-80 (SNGSVYSDETTLKTAQTHY). Residues 81–110 (TQQGQQAKPQQHTQQQQQQPQTPMQLQVPT) show a composition bias toward low complexity. Over residues 181–191 (HQPTASLSSIG) the composition is skewed to polar residues. The Ras-GEF domain occupies 471–738 (DTEKVANQIH…MEMSLKMEPP (268 aa)). Over residues 787–811 (PSTKNNNSSQASNRISQLSVNSTPH) the composition is skewed to polar residues. 3 disordered regions span residues 787-819 (PSTK…SSSA), 1645-1676 (RSVL…ARTS), and 1702-1738 (SVSS…GMGK). Composition is skewed to low complexity over residues 1656 to 1676 (SVSS…ARTS) and 1702 to 1726 (SVSS…ASPN). Positions 1751–1853 (SGFTSSSSQY…WMKAITLSKR (103 aa)) constitute a PH domain. Residues 1872–2070 (VPVEDVCERE…HLIRNPEHYF (199 aa)) enclose the Rho-GAP domain.

GTPase-activating protein (GAP) for RHO proteins. Required for polarized growth and maintenance of cell polarity. The polypeptide is GTPase-activating protein BEM2 (BEM2) (Eremothecium gossypii (strain ATCC 10895 / CBS 109.51 / FGSC 9923 / NRRL Y-1056) (Yeast)).